Here is a 59-residue protein sequence, read N- to C-terminus: Large ribosomal subunit protein uL30 (59 aa).

Belongs to the universal ribosomal protein uL30 family. In terms of assembly, part of the 50S ribosomal subunit.

This is Large ribosomal subunit protein uL30 from Ruminiclostridium cellulolyticum (strain ATCC 35319 / DSM 5812 / JCM 6584 / H10) (Clostridium cellulolyticum).